The chain runs to 204 residues: MEKEKGLLIVLSGPAGVGKGTVCSALRKHDTNIQYSVSATTRAPRKGEVDGVNYFFKSREQFEAMIEKEELLEWAEYVGNYYGTPIQYVRETIDSGKDIILEIEVQGALKVRERFPEGVFIFLMPPSLAELRSRIVGRGTETEEVINKRMNVAKEEIEMMKKYDYVVENDEVELAVDRIKAIVTAEHCKRERLIEKYHQLVEVE.

The region spanning 6–184 (GLLIVLSGPA…AVDRIKAIVT (179 aa)) is the Guanylate kinase-like domain. 13–20 (GPAGVGKG) contributes to the ATP binding site.

This sequence belongs to the guanylate kinase family.

The protein resides in the cytoplasm. The catalysed reaction is GMP + ATP = GDP + ADP. In terms of biological role, essential for recycling GMP and indirectly, cGMP. This chain is Guanylate kinase (gmk), found in Halalkalibacterium halodurans (strain ATCC BAA-125 / DSM 18197 / FERM 7344 / JCM 9153 / C-125) (Bacillus halodurans).